Reading from the N-terminus, the 704-residue chain is Elongation factor G (704 aa).

One can recognise a tr-type G domain in the interval 8-291 (DKVRNIGIMA…AVIDYLASPV (284 aa)). Residues 17–24 (AHIDAGKT), 90–94 (DTPGH), and 144–147 (NKMD) each bind GTP.

This sequence belongs to the TRAFAC class translation factor GTPase superfamily. Classic translation factor GTPase family. EF-G/EF-2 subfamily.

The protein localises to the cytoplasm. Its function is as follows. Catalyzes the GTP-dependent ribosomal translocation step during translation elongation. During this step, the ribosome changes from the pre-translocational (PRE) to the post-translocational (POST) state as the newly formed A-site-bound peptidyl-tRNA and P-site-bound deacylated tRNA move to the P and E sites, respectively. Catalyzes the coordinated movement of the two tRNA molecules, the mRNA and conformational changes in the ribosome. The protein is Elongation factor G of Chlorobaculum parvum (strain DSM 263 / NCIMB 8327) (Chlorobium vibrioforme subsp. thiosulfatophilum).